Reading from the N-terminus, the 416-residue chain is (S)-ureidoglycine--glyoxylate transaminase (416 aa).

Residue K198 is modified to N6-(pyridoxal phosphate)lysine.

It belongs to the class-V pyridoxal-phosphate-dependent aminotransferase family. Homodimer. It depends on pyridoxal 5'-phosphate as a cofactor.

The enzyme catalyses (S)-2-ureidoglycine + glyoxylate = N-carbamoyl-2-oxoglycine + glycine. It participates in nitrogen metabolism; (S)-allantoin degradation. Catalyzes the transamination between an unstable intermediate ((S)-ureidoglycine) and the end product of purine catabolism (glyoxylate) to yield oxalurate and glycine. Glyoxylate is the preferred substrate, but other amino-group acceptors can be used. The protein is (S)-ureidoglycine--glyoxylate transaminase of Bacillus subtilis (strain 168).